The sequence spans 323 residues: MDARRKHWKENKFAPLFSAQDIPNEAAQLESSSEQMPLDKVKRMEIIFNLSSRKFREENKFKRKEFISQPNENEQESNLIERKINISKTEADTNSVSCESSNLDIATEESFNSTEELPTWVIKELSTPPQKDKKKKFTEGMSSKLRLNLLNEELEVLDMKCKKIEEEFESAEKELLNSKKEVSTKPLNFQEAEVETSKTDWELQALRNDLSEKATNVKNLTEELQQAKEVIHKLSLENKDLKETVRKLKRQTEVGNAFLKEEMKLYYELEMEKIRGELTAIKNELRTEKSLQARNNRALELLRKHFASVMPSGTSDNFMGDFF.

Residues 143–290 (SKLRLNLLNE…IKNELRTEKS (148 aa)) are a coiled coil.

This sequence belongs to the CCDC160 family.

The sequence is that of Coiled-coil domain-containing protein 160 (CCDC160) from Bos taurus (Bovine).